Reading from the N-terminus, the 258-residue chain is Regulatory protein RecX (258 aa).

It belongs to the RecX family.

The protein resides in the cytoplasm. Its function is as follows. Modulates RecA activity. The chain is Regulatory protein RecX from Streptococcus gordonii (strain Challis / ATCC 35105 / BCRC 15272 / CH1 / DL1 / V288).